Reading from the N-terminus, the 392-residue chain is Putative glutamate--cysteine ligase 2 (392 aa).

The tract at residues 1-21 (MMPVSGWRAVSSAPASSSAGR) is disordered. Over residues 9 to 19 (AVSSAPASSSA) the composition is skewed to low complexity.

This sequence belongs to the glutamate--cysteine ligase type 2 family. YbdK subfamily.

The catalysed reaction is L-cysteine + L-glutamate + ATP = gamma-L-glutamyl-L-cysteine + ADP + phosphate + H(+). ATP-dependent carboxylate-amine ligase which exhibits weak glutamate--cysteine ligase activity. This Mycobacterium ulcerans (strain Agy99) protein is Putative glutamate--cysteine ligase 2.